We begin with the raw amino-acid sequence, 186 residues long: Peptide deformylase (186 aa).

Residues C94 and H136 each coordinate Fe cation. The active site involves E137. H140 provides a ligand contact to Fe cation.

The protein belongs to the polypeptide deformylase family. The cofactor is Fe(2+).

It catalyses the reaction N-terminal N-formyl-L-methionyl-[peptide] + H2O = N-terminal L-methionyl-[peptide] + formate. In terms of biological role, removes the formyl group from the N-terminal Met of newly synthesized proteins. Requires at least a dipeptide for an efficient rate of reaction. N-terminal L-methionine is a prerequisite for activity but the enzyme has broad specificity at other positions. The polypeptide is Peptide deformylase (Prosthecochloris aestuarii (strain DSM 271 / SK 413)).